We begin with the raw amino-acid sequence, 105 residues long: Thioredoxin (105 aa).

A Thioredoxin domain is found at 1-105; that stretch reads VQVISSYDQF…LQAAITQHSA (105 aa). Catalysis depends on nucleophile residues C29 and C32. Residues C29 and C32 are joined by a disulfide bond.

This sequence belongs to the thioredoxin family. Monomer.

Functionally, participates in various redox reactions through the reversible oxidation of its active center dithiol to a disulfide and catalyzes dithiol-disulfide exchange reactions. This chain is Thioredoxin, found in Malassezia sympodialis (Atopic eczema-associated yeast).